The primary structure comprises 253 residues: DNA repair protein RecO (253 aa).

The protein belongs to the RecO family.

Functionally, involved in DNA repair and RecF pathway recombination. This is DNA repair protein RecO from Dehalococcoides mccartyi (strain CBDB1).